The following is a 139-amino-acid chain: Large-conductance mechanosensitive channel (139 aa).

Transmembrane regions (helical) follow at residues 17–37 and 88–108; these read VVDM…VTSL and TVDF…IMAA.

This sequence belongs to the MscL family. In terms of assembly, homopentamer.

It localises to the cell inner membrane. Its function is as follows. Channel that opens in response to stretch forces in the membrane lipid bilayer. May participate in the regulation of osmotic pressure changes within the cell. The chain is Large-conductance mechanosensitive channel from Porphyromonas gingivalis (strain ATCC 33277 / DSM 20709 / CIP 103683 / JCM 12257 / NCTC 11834 / 2561).